The following is a 216-amino-acid chain: Translation initiation factor 6 (216 aa).

It belongs to the eIF-6 family.

Binds to the 50S ribosomal subunit and prevents its association with the 30S ribosomal subunit to form the 70S initiation complex. This chain is Translation initiation factor 6, found in Thermoplasma acidophilum (strain ATCC 25905 / DSM 1728 / JCM 9062 / NBRC 15155 / AMRC-C165).